Reading from the N-terminus, the 112-residue chain is Protein lin-52 homolog (112 aa).

The protein belongs to the lin-52 family. As to quaternary structure, component of the DREAM complex.

The protein is Protein lin-52 homolog (LIN52) of Gallus gallus (Chicken).